We begin with the raw amino-acid sequence, 283 residues long: Large ribosomal subunit protein uL2 (283 aa).

The tract at residues 215–283 (RHKGIRPTVR…IRGRKKRINN (69 aa)) is disordered. Basic residues predominate over residues 274 to 283 (IRGRKKRINN).

It belongs to the universal ribosomal protein uL2 family. In terms of assembly, part of the 50S ribosomal subunit. Forms a bridge to the 30S subunit in the 70S ribosome.

In terms of biological role, one of the primary rRNA binding proteins. Required for association of the 30S and 50S subunits to form the 70S ribosome, for tRNA binding and peptide bond formation. It has been suggested to have peptidyltransferase activity; this is somewhat controversial. Makes several contacts with the 16S rRNA in the 70S ribosome. This Mycoplasma mobile (strain ATCC 43663 / 163K / NCTC 11711) (Mesomycoplasma mobile) protein is Large ribosomal subunit protein uL2.